The chain runs to 428 residues: Serine--tRNA ligase (428 aa).

231–233 (TAE) lines the L-serine pocket. 262-264 (RSE) lines the ATP pocket. Glutamate 285 is an L-serine binding site. Residue 349–352 (EISS) coordinates ATP. Serine 385 contacts L-serine.

It belongs to the class-II aminoacyl-tRNA synthetase family. Type-1 seryl-tRNA synthetase subfamily. In terms of assembly, homodimer. The tRNA molecule binds across the dimer.

The protein localises to the cytoplasm. It catalyses the reaction tRNA(Ser) + L-serine + ATP = L-seryl-tRNA(Ser) + AMP + diphosphate + H(+). The enzyme catalyses tRNA(Sec) + L-serine + ATP = L-seryl-tRNA(Sec) + AMP + diphosphate + H(+). It functions in the pathway aminoacyl-tRNA biosynthesis; selenocysteinyl-tRNA(Sec) biosynthesis; L-seryl-tRNA(Sec) from L-serine and tRNA(Sec): step 1/1. Catalyzes the attachment of serine to tRNA(Ser). Is also able to aminoacylate tRNA(Sec) with serine, to form the misacylated tRNA L-seryl-tRNA(Sec), which will be further converted into selenocysteinyl-tRNA(Sec). The chain is Serine--tRNA ligase from Staphylococcus aureus (strain Mu3 / ATCC 700698).